Consider the following 1112-residue polypeptide: DNA repair protein rad13 (1112 aa).

The interval 1 to 95 (MGVSGLWDIL…QTIQKRQARR (95 aa)) is N-domain. Mg(2+) is bound by residues D30 and D77. One can recognise a UIM domain in the interval 395–414 (TDDLILQLATQQSLEENKKS). Residues 742–870 (KRSEKRDADE…LALEILHEFP (129 aa)) form an I-domain region. 5 residues coordinate Mg(2+): E777, E779, D798, D800, and D849. The segment at 1056–1112 (KMMASKNSSDSDSDSEDNFLASLTPKTNSSSISIENLPRKTKLSTSLLKKPSKRRRK) is disordered. Residues 1079–1089 (TPKTNSSSISI) are compositionally biased toward polar residues.

The protein belongs to the XPG/RAD2 endonuclease family. XPG subfamily. Mg(2+) serves as cofactor.

The protein localises to the nucleus. Single-stranded DNA endonuclease involved in excision repair of DNA damaged with UV light, bulky adducts, or cross-linking agents. Essential for the incision step of excision-repair. The chain is DNA repair protein rad13 (rad13) from Schizosaccharomyces pombe (strain 972 / ATCC 24843) (Fission yeast).